The primary structure comprises 315 residues: Ribose-phosphate pyrophosphokinase (315 aa).

Residues 37-39 (DSE) and 96-97 (RQ) contribute to the ATP site. Mg(2+) contacts are provided by His131 and Asp170. The active site involves Lys194. D-ribose 5-phosphate is bound by residues Arg196, Asp220, and 224 to 228 (DTGGT).

It belongs to the ribose-phosphate pyrophosphokinase family. Class I subfamily. Homohexamer. It depends on Mg(2+) as a cofactor.

It is found in the cytoplasm. The enzyme catalyses D-ribose 5-phosphate + ATP = 5-phospho-alpha-D-ribose 1-diphosphate + AMP + H(+). It participates in metabolic intermediate biosynthesis; 5-phospho-alpha-D-ribose 1-diphosphate biosynthesis; 5-phospho-alpha-D-ribose 1-diphosphate from D-ribose 5-phosphate (route I): step 1/1. Functionally, involved in the biosynthesis of the central metabolite phospho-alpha-D-ribosyl-1-pyrophosphate (PRPP) via the transfer of pyrophosphoryl group from ATP to 1-hydroxyl of ribose-5-phosphate (Rib-5-P). The chain is Ribose-phosphate pyrophosphokinase from Marinomonas sp. (strain MWYL1).